The following is a 353-amino-acid chain: Deoxyhypusine synthase (353 aa).

NAD(+) contacts are provided by residues 90–94, 116–118, Glu122, and Asp228; these read SNLIS and TAG. 121 to 122 lines the spermidine pocket; the sequence is EE. Spermidine is bound at residue Asp233. Position 275 (Gly275) interacts with NAD(+). His280 serves as a coordination point for spermidine. 300-301 serves as a coordination point for NAD(+); that stretch reads TA. Spermidine is bound by residues 306-308 and 315-321; these read GSD and EAVSWGK. Lys321 serves as the catalytic Nucleophile. Position 334–335 (334–335) interacts with NAD(+); the sequence is EA.

It belongs to the deoxyhypusine synthase family. In terms of assembly, homotetramer. It depends on NAD(+) as a cofactor.

The catalysed reaction is [eIF5A protein]-L-lysine + spermidine = [eIF5A protein]-deoxyhypusine + propane-1,3-diamine. It participates in protein modification; eIF5A hypusination. Functionally, catalyzes the NAD-dependent oxidative cleavage of spermidine and the subsequent transfer of the butylamine moiety of spermidine to the epsilon-amino group of a specific lysine residue of the eIF-5A precursor protein to form the intermediate deoxyhypusine residue. In Neurospora crassa (strain ATCC 24698 / 74-OR23-1A / CBS 708.71 / DSM 1257 / FGSC 987), this protein is Deoxyhypusine synthase (dys-1).